We begin with the raw amino-acid sequence, 563 residues long: Methylcrotonoyl-CoA carboxylase beta chain, mitochondrial (563 aa).

The N-terminal 22 residues, 1 to 22 (MWGALRSVLRPCSRASVPRQRA), are a transit peptide targeting the mitochondrion. Residues 49 to 306 (MKALVNQLHE…QKKLDVTVEP (258 aa)) form the CoA carboxyltransferase N-terminal domain. Residues 49-555 (MKALVNQLHE…SAALNAPIQR (507 aa)) form a carboxyltransferase region. Residue K70 is modified to N6-acetyllysine; alternate. K70 carries the N6-succinyllysine; alternate modification. N6-succinyllysine is present on K141. The CoA carboxyltransferase C-terminal domain occupies 309 to 555 (EPLFPADELY…SAALNAPIQR (247 aa)). Residues 343 to 372 (RFNEFKALYGDTLVTGFARIFGYPVGIIGN) are acyl-CoA binding. Position 433 is an N6-succinyllysine (K433). K495 is subject to N6-acetyllysine; alternate. An N6-succinyllysine; alternate modification is found at K495. K511 carries the N6-acetyllysine modification.

Belongs to the AccD/PCCB family. In terms of assembly, probably a dodecamer composed of six biotin-containing alpha subunits (MCCC1) and six beta (MCCC2) subunits.

It localises to the mitochondrion matrix. The catalysed reaction is 3-methylbut-2-enoyl-CoA + hydrogencarbonate + ATP = 3-methyl-(2E)-glutaconyl-CoA + ADP + phosphate + H(+). The protein operates within amino-acid degradation; L-leucine degradation; (S)-3-hydroxy-3-methylglutaryl-CoA from 3-isovaleryl-CoA: step 2/3. Carboxyltransferase subunit of the 3-methylcrotonyl-CoA carboxylase, an enzyme that catalyzes the conversion of 3-methylcrotonyl-CoA to 3-methylglutaconyl-CoA, a critical step for leucine and isovaleric acid catabolism. This Rattus norvegicus (Rat) protein is Methylcrotonoyl-CoA carboxylase beta chain, mitochondrial (Mccc2).